We begin with the raw amino-acid sequence, 145 residues long: 3-hydroxyacyl-[acyl-carrier-protein] dehydratase FabZ (145 aa).

The active site involves histidine 49.

This sequence belongs to the thioester dehydratase family. FabZ subfamily.

The protein resides in the cytoplasm. The enzyme catalyses a (3R)-hydroxyacyl-[ACP] = a (2E)-enoyl-[ACP] + H2O. In terms of biological role, involved in unsaturated fatty acids biosynthesis. Catalyzes the dehydration of short chain beta-hydroxyacyl-ACPs and long chain saturated and unsaturated beta-hydroxyacyl-ACPs. The protein is 3-hydroxyacyl-[acyl-carrier-protein] dehydratase FabZ of Ehrlichia ruminantium (strain Gardel).